The chain runs to 347 residues: S-adenosylmethionine:tRNA ribosyltransferase-isomerase (347 aa).

It belongs to the QueA family. As to quaternary structure, monomer.

The protein localises to the cytoplasm. It carries out the reaction 7-aminomethyl-7-carbaguanosine(34) in tRNA + S-adenosyl-L-methionine = epoxyqueuosine(34) in tRNA + adenine + L-methionine + 2 H(+). It participates in tRNA modification; tRNA-queuosine biosynthesis. Its function is as follows. Transfers and isomerizes the ribose moiety from AdoMet to the 7-aminomethyl group of 7-deazaguanine (preQ1-tRNA) to give epoxyqueuosine (oQ-tRNA). The protein is S-adenosylmethionine:tRNA ribosyltransferase-isomerase of Pseudomonas aeruginosa (strain LESB58).